The following is a 262-amino-acid chain: MTALSEIFVPLHRIIPFSNVEGQGNRSSIFLQGCKLNCLYCHNPETIPRYTESAKLVSLQYLYEQVMEAVPFIRGVTVSGGEPTIHHKKLVPLFKALRSQGLTCYLDSSGFFEFDRVCSLIDVTDKFLFDLKGEGIGLQTLCFDRKNQAGIVPQQVIPERLHIKNDKLERNLQNLAALLPLNKVEEVRLVFLKHFFDAEHLVGKVAQLLRNYPDVALKIIRVHSKGVRDEAGLSAYIPSVEETNALSAYARQCGINKILTIL.

One can recognise a Radical SAM core domain in the interval 20 to 262 (VEGQGNRSSI…CGINKILTIL (243 aa)). Residues Cys34, Cys38, and Cys41 each coordinate [4Fe-4S] cluster. S-adenosyl-L-methionine-binding positions include 40-42 (YCH), Gly81, and 130-132 (DLK).

The protein belongs to the organic radical-activating enzymes family. [4Fe-4S] cluster serves as cofactor.

The catalysed reaction is glycyl-[protein] + reduced [flavodoxin] + S-adenosyl-L-methionine = glycin-2-yl radical-[protein] + semiquinone [flavodoxin] + 5'-deoxyadenosine + L-methionine + H(+). This is Putative glycyl-radical enzyme activating enzyme HI_0520 from Haemophilus influenzae (strain ATCC 51907 / DSM 11121 / KW20 / Rd).